The primary structure comprises 296 residues: Testis-expressed protein 26 (296 aa).

5 mn regions span residues A30–G42, E69–K83, I140–S153, D175–P189, and Q229–F243.

In Mus musculus (Mouse), this protein is Testis-expressed protein 26 (Tex26).